Consider the following 194-residue polypeptide: Fibroblast growth factor 7 (194 aa).

The first 31 residues, 1-31 (MRKWILTWILPSLLYRSCFHIICLVGTISLA), serve as a signal peptide directing secretion. Residue Asn-45 is glycosylated (N-linked (GlcNAc...) asparagine).

It belongs to the heparin-binding growth factors family. In terms of assembly, interacts with FGFBP1. Interacts with FGFR2. Affinity between fibroblast growth factors (FGFs) and their receptors is increased by heparan sulfate glycosaminoglycans that function as coreceptors.

Functionally, plays an important role in the regulation of embryonic development, cell proliferation and cell differentiation. Required for normal branching morphogenesis. Growth factor active on keratinocytes. Possible major paracrine effector of normal epithelial cell proliferation. The protein is Fibroblast growth factor 7 (FGF7) of Ovis aries (Sheep).